The sequence spans 546 residues: Sulfite oxidase, mitochondrial (546 aa).

The N-terminal 80 residues, 1-80 (MLLQLYRSVV…YHEHRCRASQ (80 aa)), are a transit peptide targeting the mitochondrion. Positions 83–162 (PRMYSKEDVR…LAEYKIGELN (80 aa)) constitute a Cytochrome b5 heme-binding domain. H119 lines the heme b pocket. S124 is subject to Phosphoserine. The heme b site is built by H144, Q146, and H148. The tract at residues 166–175 (SMSPSVEASD) is hinge. The tract at residues 176–402 (PYADDPIRHP…YSHWQRRDYK (227 aa)) is moco domain. Residues 216–220 (FTRNH), C265, D323, H362, R367, and 378–380 (HVK) contribute to the Mo-molybdopterin site. The tract at residues 403-539 (GFSPSVDWDT…RGVLSNAWHR (137 aa)) is homodimerization.

Homodimer. It depends on heme b as a cofactor. Mo-molybdopterin is required as a cofactor.

Its subcellular location is the mitochondrion intermembrane space. It carries out the reaction sulfite + O2 + H2O = sulfate + H2O2. The protein operates within energy metabolism; sulfur metabolism. Catalyzes the oxidation of sulfite to sulfate, the terminal reaction in the oxidative degradation of sulfur-containing amino acids. In Mus musculus (Mouse), this protein is Sulfite oxidase, mitochondrial (Suox).